A 326-amino-acid chain; its full sequence is Centriolar satellite-associated tubulin polyglutamylase complex regulator 1 (326 aa).

The required for interaction with PCM1 stretch occupies residues 1–111 (MLSPERLALP…HCLLQLLCPD (111 aa)). The tract at residues 1 to 225 (MLSPERLALP…SCPPPALVKE (225 aa)) is required for interaction with TPGS1, LRRC49, and TTLL1.

This sequence belongs to the CSTPP1 family. In terms of assembly, interacts with PCM1. Interacts with TTLL1, TPGS1, TPGS2 and LRRC49; the interactions link CSTPP1 to the complex TPGC. Binds to alpha-tubulin.

The protein resides in the cytoplasm. It localises to the cytoskeleton. It is found in the microtubule organizing center. The protein localises to the centrosome. Its subcellular location is the centriolar satellite. Functionally, regulator of the tubulin polyglutamylase complex (TPGC) that controls cytoskeletal organization, nuclear shape, and cilium disassembly by balancing microtubule and actin assembly. Regulates the assembly and stability of the TPGC and thereby modulates polyglutamylation of the microtubule, which antagonizes MAP4 binding. The polypeptide is Centriolar satellite-associated tubulin polyglutamylase complex regulator 1 (CSTPP1) (Bos taurus (Bovine)).